Reading from the N-terminus, the 114-residue chain is Tyrosine-protein phosphatase 11 (114 aa).

The Tyrosine-protein phosphatase domain occupies 1–114 (WRMIWEHNTR…EAKHTGPTIV (114 aa)). D81 is a binding site for substrate.

Belongs to the protein-tyrosine phosphatase family.

It carries out the reaction O-phospho-L-tyrosyl-[protein] + H2O = L-tyrosyl-[protein] + phosphate. The sequence is that of Tyrosine-protein phosphatase 11 (STY-11) from Styela plicata (Wrinkled sea squirt).